The sequence spans 297 residues: Acetylglutamate kinase (297 aa).

Residues 70–71 (GG), arginine 92, and asparagine 194 each bind substrate.

The protein belongs to the acetylglutamate kinase family. ArgB subfamily.

Its subcellular location is the cytoplasm. The catalysed reaction is N-acetyl-L-glutamate + ATP = N-acetyl-L-glutamyl 5-phosphate + ADP. It participates in amino-acid biosynthesis; L-arginine biosynthesis; N(2)-acetyl-L-ornithine from L-glutamate: step 2/4. Functionally, catalyzes the ATP-dependent phosphorylation of N-acetyl-L-glutamate. This chain is Acetylglutamate kinase, found in Herminiimonas arsenicoxydans.